The chain runs to 172 residues: Ferritin-2 heavy chain (172 aa).

The Ferritin-like diiron domain maps to 8–157; it reads QSFATECENA…DYLTETQRVG (150 aa). Fe cation is bound by residues Glu-25, Glu-60, His-63, Glu-105, and Gln-139.

This sequence belongs to the ferritin family. As to quaternary structure, oligomer of 24 subunits. The functional molecule forms a roughly spherical shell with a diameter of 12 nm and contains a central cavity into which the insoluble mineral iron core is deposited.

The enzyme catalyses 4 Fe(2+) + O2 + 4 H(+) = 4 Fe(3+) + 2 H2O. In terms of biological role, stores iron in a soluble, non-toxic, readily available form. Important for iron homeostasis. Has ferroxidase activity. Iron is taken up in the ferrous form and deposited as ferric hydroxides after oxidation. This chain is Ferritin-2 heavy chain (SCM-2), found in Schistosoma mansoni (Blood fluke).